Consider the following 492-residue polypeptide: Sestrin-1 (492 aa).

Residues 71 to 252 are N-terminal domain; may mediate the alkylhydroperoxide reductase activity; that stretch reads FADSFAALGR…ICDITNGNHS (182 aa). The active-site Cysteine sulfenic acid (-SOH) intermediate is Cys130. Residues Ser293 and Ser314 each carry the phosphoserine modification. Residues 321–492 are C-terminal domain; mediates TORC1 regulation; that stretch reads PARDVSRHFE…ALRAITRYMT (172 aa). L-leucine is bound by residues 386–389, Thr398, and Glu463; that span reads TYNT.

Belongs to the sestrin family. Interacts with the GATOR2 complex which is composed of MIOS, SEC13, SEH1L, WDR24 and WDR59; the interaction is negatively regulated by leucine. Interacts with RRAGA, RRAGB, RRAGC and RRAGD; may function as a guanine nucleotide dissociation inhibitor for RRAGs and regulate them. Interacts with KEAP1, RBX1 and SQSTM1; in the SQSTM1-dependent autophagic degradation of KEAP1. May interact with PRDX1.

Its subcellular location is the nucleus. It localises to the cytoplasm. It catalyses the reaction a hydroperoxide + L-cysteinyl-[protein] = S-hydroxy-L-cysteinyl-[protein] + an alcohol. Functionally, functions as an intracellular leucine sensor that negatively regulates the TORC1 signaling pathway through the GATOR complex. In absence of leucine, binds the GATOR subcomplex GATOR2 and prevents TORC1 signaling. Binding of leucine to SESN2 disrupts its interaction with GATOR2 thereby activating the TORC1 signaling pathway. This stress-inducible metabolic regulator may also play a role in protection against oxidative and genotoxic stresses. May positively regulate the transcription by NFE2L2 of genes involved in the response to oxidative stress by facilitating the SQSTM1-mediated autophagic degradation of KEAP1. Moreover, may prevent the accumulation of reactive oxygen species (ROS) through the alkylhydroperoxide reductase activity born by the N-terminal domain of the protein. Was originally reported to contribute to oxidative stress resistance by reducing PRDX1. However, this could not be confirmed. The polypeptide is Sestrin-1 (Macaca fascicularis (Crab-eating macaque)).